A 274-amino-acid chain; its full sequence is Thiamine kinase (274 aa).

The protein belongs to the thiamine kinase family.

The enzyme catalyses thiamine + ATP = thiamine phosphate + ADP + H(+). Its pathway is cofactor biosynthesis; thiamine diphosphate biosynthesis; thiamine phosphate from thiamine: step 1/1. In terms of biological role, catalyzes the ATP-dependent phosphorylation of thiamine to thiamine phosphate. Is involved in thiamine salvage. The polypeptide is Thiamine kinase (Escherichia coli O17:K52:H18 (strain UMN026 / ExPEC)).